The chain runs to 487 residues: Cobyric acid synthase (487 aa).

Positions 249 to 435 (GIDIAIVRLP…IHGIFDEGDF (187 aa)) constitute a GATase cobBQ-type domain. The active-site Nucleophile is C330. The active site involves H427.

This sequence belongs to the CobB/CobQ family. CobQ subfamily.

It functions in the pathway cofactor biosynthesis; adenosylcobalamin biosynthesis. Its function is as follows. Catalyzes amidations at positions B, D, E, and G on adenosylcobyrinic A,C-diamide. NH(2) groups are provided by glutamine, and one molecule of ATP is hydrogenolyzed for each amidation. This Clostridium perfringens (strain SM101 / Type A) protein is Cobyric acid synthase.